We begin with the raw amino-acid sequence, 469 residues long: Glutamine synthetase (469 aa).

Residues 15–96 form the GS beta-grasp domain; it reads EDVKFIDVRF…INFFIHDPIT (82 aa). Residues 104–469 form the GS catalytic domain; that stretch reads PRNVAKKAEA…PYEYEQYYDV (366 aa). Mg(2+)-binding residues include E129 and E131. E205 serves as a coordination point for ATP. Residues E210 and E218 each coordinate Mg(2+). 221 to 223 is an ATP binding site; that stretch reads YKF. L-glutamate-binding positions include 262–263 and G263; that span reads NG. Residue H267 participates in Mg(2+) binding. Residues 269–271 and S271 each bind ATP; that span reads HQS. The L-glutamate site is built by R320, E326, and R338. Residues R338, R343, and K352 each coordinate ATP. E357 contributes to the Mg(2+) binding site. R359 contributes to the L-glutamate binding site. Position 397 is an O-AMP-tyrosine (Y397).

It belongs to the glutamine synthetase family. As to quaternary structure, oligomer of 12 subunits arranged in the form of two hexagons. It depends on Mg(2+) as a cofactor.

The protein localises to the cytoplasm. The catalysed reaction is L-glutamate + NH4(+) + ATP = L-glutamine + ADP + phosphate + H(+). With respect to regulation, the activity of this enzyme could be controlled by adenylation under conditions of abundant glutamine. In terms of biological role, catalyzes the ATP-dependent biosynthesis of glutamine from glutamate and ammonia. This chain is Glutamine synthetase, found in Streptomyces viridochromogenes.